The sequence spans 162 residues: Nucleotide-binding protein AnaeK_0101 (162 aa).

The protein belongs to the YajQ family.

Its function is as follows. Nucleotide-binding protein. The chain is Nucleotide-binding protein AnaeK_0101 from Anaeromyxobacter sp. (strain K).